The chain runs to 181 residues: ATP synthase subunit delta (181 aa).

This sequence belongs to the ATPase delta chain family. F-type ATPases have 2 components, F(1) - the catalytic core - and F(0) - the membrane proton channel. F(1) has five subunits: alpha(3), beta(3), gamma(1), delta(1), epsilon(1). F(0) has three main subunits: a(1), b(2) and c(10-14). The alpha and beta chains form an alternating ring which encloses part of the gamma chain. F(1) is attached to F(0) by a central stalk formed by the gamma and epsilon chains, while a peripheral stalk is formed by the delta and b chains. The F(1)F(0) complex interacts with SpoIIIJ and YqjG; YqgA is found in the same complex. Interacts with FloT.

The protein localises to the cell membrane. It is found in the membrane raft. Its function is as follows. F(1)F(0) ATP synthase produces ATP from ADP in the presence of a proton or sodium gradient. F-type ATPases consist of two structural domains, F(1) containing the extramembraneous catalytic core and F(0) containing the membrane proton channel, linked together by a central stalk and a peripheral stalk. During catalysis, ATP synthesis in the catalytic domain of F(1) is coupled via a rotary mechanism of the central stalk subunits to proton translocation. In terms of biological role, this protein is part of the stalk that links CF(0) to CF(1). It either transmits conformational changes from CF(0) to CF(1) or is implicated in proton conduction. The sequence is that of ATP synthase subunit delta from Bacillus subtilis (strain 168).